A 254-amino-acid polypeptide reads, in one-letter code: Aspartate/glutamate leucyltransferase (254 aa).

This sequence belongs to the R-transferase family. Bpt subfamily.

The protein localises to the cytoplasm. It catalyses the reaction N-terminal L-glutamyl-[protein] + L-leucyl-tRNA(Leu) = N-terminal L-leucyl-L-glutamyl-[protein] + tRNA(Leu) + H(+). The catalysed reaction is N-terminal L-aspartyl-[protein] + L-leucyl-tRNA(Leu) = N-terminal L-leucyl-L-aspartyl-[protein] + tRNA(Leu) + H(+). In terms of biological role, functions in the N-end rule pathway of protein degradation where it conjugates Leu from its aminoacyl-tRNA to the N-termini of proteins containing an N-terminal aspartate or glutamate. This Xylella fastidiosa (strain 9a5c) protein is Aspartate/glutamate leucyltransferase.